An 83-amino-acid chain; its full sequence is Cytochrome b559 subunit alpha (83 aa).

A helical transmembrane segment spans residues 21–35 (VIHSITVPSLFIAGW). H23 contacts heme.

The protein belongs to the PsbE/PsbF family. As to quaternary structure, heterodimer of an alpha subunit and a beta subunit. PSII is composed of 1 copy each of membrane proteins PsbA, PsbB, PsbC, PsbD, PsbE, PsbF, PsbH, PsbI, PsbJ, PsbK, PsbL, PsbM, PsbT, PsbX, PsbY, PsbZ, Psb30/Ycf12, at least 3 peripheral proteins of the oxygen-evolving complex and a large number of cofactors. It forms dimeric complexes. It depends on heme b as a cofactor.

The protein localises to the plastid. The protein resides in the chloroplast thylakoid membrane. In terms of biological role, this b-type cytochrome is tightly associated with the reaction center of photosystem II (PSII). PSII is a light-driven water:plastoquinone oxidoreductase that uses light energy to abstract electrons from H(2)O, generating O(2) and a proton gradient subsequently used for ATP formation. It consists of a core antenna complex that captures photons, and an electron transfer chain that converts photonic excitation into a charge separation. This chain is Cytochrome b559 subunit alpha, found in Oltmannsiellopsis viridis (Marine flagellate).